The sequence spans 1071 residues: ATP-dependent helicase/deoxyribonuclease subunit B (1071 aa).

This sequence belongs to the helicase family. AddB/RexB type 2 subfamily. Heterodimer of AddA and RexB. Mg(2+) serves as cofactor.

Its function is as follows. The heterodimer acts as both an ATP-dependent DNA helicase and an ATP-dependent, dual-direction single-stranded exonuclease. Recognizes the chi site generating a DNA molecule suitable for the initiation of homologous recombination. This subunit has 5' -&gt; 3' nuclease activity but not helicase activity. The chain is ATP-dependent helicase/deoxyribonuclease subunit B from Streptococcus pyogenes serotype M12 (strain MGAS2096).